The chain runs to 463 residues: Elongation factor 1-alpha (463 aa).

The 238-residue stretch at 8–245 folds into the tr-type G domain; the sequence is KTHLNIVIIG…DALVPPVRPA (238 aa). The segment at 17–24 is G1; it reads GHVDSGKS. GTP is bound at residue 17-24; the sequence is GHVDSGKS. The tract at residues 73–77 is G2; that stretch reads GITID. A G3 region spans residues 94 to 97; sequence DAPG. Residues 94–98 and 156–159 contribute to the GTP site; these read DAPGH and NKMD. Residues 156–159 are G4; it reads NKMD. Residues 197–199 form a G5 region; that stretch reads SGW.

It belongs to the TRAFAC class translation factor GTPase superfamily. Classic translation factor GTPase family. EF-Tu/EF-1A subfamily. As to quaternary structure, the 42S RNP particle comprises four subunits each of which contains one molecule of 5S RNA, three molecules of tRNA, two molecules of EF1-alpha and one molecule of the 5S RNA binding protein 43.

It localises to the cytoplasm. In terms of biological role, this protein is one of two protein components of a 42S RNP particle that is very abundant in previtellogenic oocytes. A major function served by 42sp50 appears to be the storage of tRNAs for later use in oogenesis and early embryogenesis. Purified 42S particles can directly transfer aminoacyl tRNA to ribosomes. In Xenopus laevis (African clawed frog), this protein is Elongation factor 1-alpha.